Consider the following 374-residue polypeptide: Eukaryotic translation initiation factor 3 subunit M (374 aa).

The residue at position 2 (Ser-2) is an N-acetylserine. Phosphoserine occurs at positions 2 and 152. A PCI domain is found at 180–339 (AASKVMVELL…RKVVVSHSTH (160 aa)). Lys-254 is modified (N6-acetyllysine). Positions 344–374 (KQQWQQLYDTLNAWKQNLNKVKNSLLSLSDT) are interaction with HSV-1 and HSV-2. A Phosphoserine modification is found at Ser-367.

As to quaternary structure, component of the eukaryotic translation initiation factor 3 (eIF-3) complex, which is composed of 13 subunits: EIF3A, EIF3B, EIF3C, EIF3D, EIF3E, EIF3F, EIF3G, EIF3H, EIF3I, EIF3J, EIF3K, EIF3L and EIF3M. The eIF-3 complex appears to include 3 stable modules: module A is composed of EIF3A, EIF3B, EIF3G and EIF3I; module B is composed of EIF3F, EIF3H, and EIF3M; and module C is composed of EIF3C, EIF3D, EIF3E, EIF3K and EIF3L. EIF3C of module C binds EIF3B of module A and EIF3H of module B, thereby linking the three modules. EIF3J is a labile subunit that binds to the eIF-3 complex via EIF3B. The eIF-3 complex interacts with RPS6KB1 under conditions of nutrient depletion. Mitogenic stimulation leads to binding and activation of a complex composed of MTOR and RPTOR, leading to phosphorylation and release of RPS6KB1 and binding of EIF4B to eIF-3. Broadly expressed.

It is found in the cytoplasm. Its function is as follows. Component of the eukaryotic translation initiation factor 3 (eIF-3) complex, which is required for several steps in the initiation of protein synthesis. The eIF-3 complex associates with the 40S ribosome and facilitates the recruitment of eIF-1, eIF-1A, eIF-2:GTP:methionyl-tRNAi and eIF-5 to form the 43S pre-initiation complex (43S PIC). The eIF-3 complex stimulates mRNA recruitment to the 43S PIC and scanning of the mRNA for AUG recognition. The eIF-3 complex is also required for disassembly and recycling of post-termination ribosomal complexes and subsequently prevents premature joining of the 40S and 60S ribosomal subunits prior to initiation. The eIF-3 complex specifically targets and initiates translation of a subset of mRNAs involved in cell proliferation, including cell cycling, differentiation and apoptosis, and uses different modes of RNA stem-loop binding to exert either translational activation or repression. Functionally, (Microbial infection) May favor virus entry in case of infection with herpes simplex virus 1 (HSV1) or herpes simplex virus 2 (HSV2). The polypeptide is Eukaryotic translation initiation factor 3 subunit M (Homo sapiens (Human)).